A 163-amino-acid chain; its full sequence is Adenosine 5'-monophosphoramidase HINT2 (163 aa).

A mitochondrion-targeting transit peptide spans 1–17 (MAAAVVLAAGLRAARRA). The region spanning 55-163 (IFSRILDKSL…GGRQLQWPPG (109 aa)) is the HIT domain. Residues S63 and D80 each contribute to the AMP site. The residue at position 119 (K119) is an N6-acetyllysine. N136 serves as a coordination point for AMP. An N6-acetyllysine modification is found at K139. AMP-binding positions include 142-145 (AQSV) and 149-151 (HIH). The Histidine triad motif motif lies at 147–151 (HLHIH). Residue H149 is the Tele-AMP-histidine intermediate of the active site.

Belongs to the HINT family. As to expression, high expression in liver and pancreas. Expression is significantly down-regulated in hepatocellular carcinoma (HCC) patients.

It is found in the mitochondrion. It carries out the reaction adenosine 5'-phosphoramidate + H2O = AMP + NH4(+). Exhibits adenosine 5'-monophosphoramidase activity, hydrolyzing purine nucleotide phosphoramidates with a single phosphate group such as adenosine 5'monophosphoramidate (AMP-NH2) to yield AMP and NH2. Hydrolyzes adenosine 5'-O-p-nitrophenylphosphoramidate (AMP-pNA). Hydrolyzes fluorogenic purine nucleoside tryptamine phosphoramidates in vitro. May be involved in steroid biosynthesis. May play a role in apoptosis. The polypeptide is Adenosine 5'-monophosphoramidase HINT2 (Homo sapiens (Human)).